The chain runs to 301 residues: NAD kinase (301 aa).

The Proton acceptor role is filled by D73. Residues 73–74 (DG), 160–161 (NE), R188, D190, A198, 201–206 (TAYNIS), A225, and Q257 each bind NAD(+).

This sequence belongs to the NAD kinase family. The cofactor is a divalent metal cation.

The protein resides in the cytoplasm. The enzyme catalyses NAD(+) + ATP = ADP + NADP(+) + H(+). Functionally, involved in the regulation of the intracellular balance of NAD and NADP, and is a key enzyme in the biosynthesis of NADP. Catalyzes specifically the phosphorylation on 2'-hydroxyl of the adenosine moiety of NAD to yield NADP. The chain is NAD kinase from Helicobacter hepaticus (strain ATCC 51449 / 3B1).